Here is a 129-residue protein sequence, read N- to C-terminus: Replication initiation control protein YabA (129 aa).

The Zn(2+) site is built by H103, C105, C119, and C122.

Belongs to the YabA family. In terms of assembly, homotetramer. Interacts with both DnaA and DnaN, acting as a bridge between these two proteins. It depends on Zn(2+) as a cofactor.

Its subcellular location is the cytoplasm. It localises to the nucleoid. Functionally, involved in control of chromosome replication initiation. Inhibits the cooperative binding of DnaA to the oriC region, thus negatively regulating initiation of chromosome replication. Inhibits the ability of DnaA-ATP to form a helix on DNA; does not disassemble preformed DnaA-DNA helices. Decreases the residence time of DnaA on the chromosome at its binding sites (oriC, replication forks and promoter-binding sites). Tethers DnaA to the replication machinery via the DNA polymerase beta sliding clamp subunit (dnaN). Associates with oriC and other DnaA targets on the chromosome in a DnaA-dependent manner. This is Replication initiation control protein YabA from Listeria innocua serovar 6a (strain ATCC BAA-680 / CLIP 11262).